The following is a 253-amino-acid chain: MSILFYVMFLAYLRGVQGNSMDQRSLPEDSLNSLIIKLIQADILKNKLSKQMVDVKENYQSTLPKAEAPPREPAKSEFQPVTAMGPELLRQQRRYSSPRVLLSDSTPLEPPPLYLMEDYVGSPVAANRTSRRKRYAEHKSHRGEYSVCDSESLWVTDKSSAIDIRGHQVTVLGEIKTGNSPVKQYFYETRCKEARPVKNGCRGIDDKHWNSQCKTSQTYVRALTSENNKLVGWRWIRIDTSCVCALSRKIGRT.

The N-terminal stretch at 1–18 is a signal peptide; the sequence is MSILFYVMFLAYLRGVQG. The propeptide occupies 19–134; that stretch reads NSMDQRSLPE…AANRTSRRKR (116 aa). Positions 62 to 89 are disordered; sequence TLPKAEAPPREPAKSEFQPVTAMGPELL. Asn-127 carries an N-linked (GlcNAc...) asparagine glycan. Intrachain disulfides connect Cys-148-Cys-213, Cys-191-Cys-242, and Cys-201-Cys-244.

This sequence belongs to the NGF-beta family.

Its subcellular location is the secreted. Seems to promote the survival of visceral and proprioceptive sensory neurons. This is Neurotrophin-3 (NTF3) from Bos taurus (Bovine).